Here is a 219-residue protein sequence, read N- to C-terminus: ATP phosphoribosyltransferase (219 aa).

This sequence belongs to the ATP phosphoribosyltransferase family. Short subfamily. In terms of assembly, heteromultimer composed of HisG and HisZ subunits.

It localises to the cytoplasm. The catalysed reaction is 1-(5-phospho-beta-D-ribosyl)-ATP + diphosphate = 5-phospho-alpha-D-ribose 1-diphosphate + ATP. It participates in amino-acid biosynthesis; L-histidine biosynthesis; L-histidine from 5-phospho-alpha-D-ribose 1-diphosphate: step 1/9. Functionally, catalyzes the condensation of ATP and 5-phosphoribose 1-diphosphate to form N'-(5'-phosphoribosyl)-ATP (PR-ATP). Has a crucial role in the pathway because the rate of histidine biosynthesis seems to be controlled primarily by regulation of HisG enzymatic activity. The polypeptide is ATP phosphoribosyltransferase (Paramagnetospirillum magneticum (strain ATCC 700264 / AMB-1) (Magnetospirillum magneticum)).